An 88-amino-acid polypeptide reads, in one-letter code: Apolipoprotein C-I (88 aa).

The N-terminal stretch at 1–26 is a signal peptide; the sequence is MRLLISLPVLIVVLAMALEGPAPAQA.

The protein belongs to the apolipoprotein C1 family.

The protein resides in the secreted. Inhibitor of lipoprotein binding to the low density lipoprotein (LDL) receptor, LDL receptor-related protein, and very low density lipoprotein (VLDL) receptor. Associates with high density lipoproteins (HDL) and the triacylglycerol-rich lipoproteins in the plasma and makes up about 10% of the protein of the VLDL and 2% of that of HDL. Appears to interfere directly with fatty acid uptake and is also the major plasma inhibitor of cholesteryl ester transfer protein (CETP). Modulates the interaction of APOE with beta-migrating VLDL and inhibits binding of beta-VLDL to the LDL receptor-related protein. Binds free fatty acids and reduces their intracellular esterification. This chain is Apolipoprotein C-I (APOC1), found in Mesocricetus auratus (Golden hamster).